The following is a 120-amino-acid chain: Large ribosomal subunit protein bL19 (120 aa).

The protein belongs to the bacterial ribosomal protein bL19 family.

This protein is located at the 30S-50S ribosomal subunit interface and may play a role in the structure and function of the aminoacyl-tRNA binding site. This is Large ribosomal subunit protein bL19 from Nostoc punctiforme (strain ATCC 29133 / PCC 73102).